Here is a 190-residue protein sequence, read N- to C-terminus: ATP synthase subunit delta (190 aa).

The protein belongs to the ATPase delta chain family. In terms of assembly, F-type ATPases have 2 components, F(1) - the catalytic core - and F(0) - the membrane proton channel. F(1) has five subunits: alpha(3), beta(3), gamma(1), delta(1), epsilon(1). F(0) has three main subunits: a(1), b(2) and c(10-14). The alpha and beta chains form an alternating ring which encloses part of the gamma chain. F(1) is attached to F(0) by a central stalk formed by the gamma and epsilon chains, while a peripheral stalk is formed by the delta and b chains.

The protein resides in the cell inner membrane. Its function is as follows. F(1)F(0) ATP synthase produces ATP from ADP in the presence of a proton or sodium gradient. F-type ATPases consist of two structural domains, F(1) containing the extramembraneous catalytic core and F(0) containing the membrane proton channel, linked together by a central stalk and a peripheral stalk. During catalysis, ATP synthesis in the catalytic domain of F(1) is coupled via a rotary mechanism of the central stalk subunits to proton translocation. In terms of biological role, this protein is part of the stalk that links CF(0) to CF(1). It either transmits conformational changes from CF(0) to CF(1) or is implicated in proton conduction. The sequence is that of ATP synthase subunit delta from Anaplasma marginale (strain Florida).